We begin with the raw amino-acid sequence, 340 residues long: Galactoside alpha-(1,2)-fucosyltransferase 2 (340 aa).

Residues 1–7 are Cytoplasmic-facing; it reads MLSMQAS. The helical; Signal-anchor for type II membrane protein transmembrane segment at 8–28 threads the bilayer; that stretch reads FFFPTGPFILFVFTASTIFHL. Residues 29–340 are Lumenal-facing; the sequence is QQRMVKIQPT…EADLSPLLKH (312 aa). Asparagine 185, asparagine 251, asparagine 279, and asparagine 305 each carry an N-linked (GlcNAc...) asparagine glycan.

The protein localises to the golgi apparatus. It localises to the golgi stack membrane. It catalyses the reaction a beta-D-galactosyl-(1-&gt;3)-N-acetyl-beta-D-glucosaminyl derivative + GDP-beta-L-fucose = an alpha-L-Fuc-(1-&gt;2)-beta-D-Gal-(1-&gt;3)-beta-D-GlcNAc derivative + GDP + H(+). The enzyme catalyses a beta-D-galactosyl-(1-&gt;4)-N-acetyl-beta-D-glucosaminyl derivative + GDP-beta-L-fucose = an alpha-L-Fuc-(1-&gt;2)-beta-D-Gal-(1-&gt;4)-beta-D-GlcNAc derivative + GDP + H(+). The catalysed reaction is a neolactoside nLc4Cer + GDP-beta-L-fucose = a neolactoside IV(2)-alpha-Fuc-nLc4Cer + GDP + H(+). It carries out the reaction a neolactoside nLc4Cer(d18:1(4E)) + GDP-beta-L-fucose = a neolactoside IV(2)-alpha-Fuc-nLc4Cer(d18:1(4E)) + GDP + H(+). It catalyses the reaction a ganglioside GM1 + GDP-beta-L-fucose = a ganglioside Fuc-GM1 + GDP + H(+). The enzyme catalyses a ganglioside GA1 + GDP-beta-L-fucose = a ganglioside Fuc-GA1 + GDP + H(+). The catalysed reaction is Lc4Cer + GDP-beta-L-fucose = alpha-L-fucosyl-(1-&gt;2)-beta-D-galactosyl-(1-&gt;3)-N-acetyl-beta-D-glucosaminyl-(1-&gt;3)-beta-D-galactosyl-(1-&gt;4)-beta-D-glucosyl-(1&lt;-&gt;1')-ceramide + GDP + H(+). It carries out the reaction a beta-D-Gal-(1-&gt;3)-beta-D-GlcNAc-(1-&gt;3)-beta-D-Gal-(1-&gt;4)-beta-D-Glc-(1&lt;-&gt;1')-Cer(d18:1(4E)) + GDP-beta-L-fucose = alpha-L-fucosyl-(1-&gt;2)- beta-D-galactosyl-(1-&gt;3)-N-acetyl-beta-D-glucosaminyl-(1-&gt;3)-beta-D-galactosyl-(1-&gt;4)-beta-D-glucosyl-(1&lt;-&gt;1')-N-acylsphing-4-enine + GDP + H(+). It catalyses the reaction a ganglioside GD1b + GDP-beta-L-fucose = a ganglioside Fuc-GD1b + GDP + H(+). The enzyme catalyses a ganglioside GM1 (d18:1(4E)) + GDP-beta-L-fucose = a ganglioside Fuc-GM1 (d18:1(4E)) + GDP + H(+). The catalysed reaction is a globoside GalGb4Cer (d18:1(4E)) + GDP-beta-L-fucose = a globoside Globo-H (d18:1(4E)) + GDP + H(+). It carries out the reaction a lactoside III(4)-a-Fuc-Lc4Cer + GDP-beta-L-fucose = a lactoside IV(2),III(4)-a-[Fuc]2-Lc4Cer + GDP + H(+). It catalyses the reaction beta-D-galactosyl-(1-&gt;3)-N-acetyl-D-galactosamine + GDP-beta-L-fucose = alpha-L-fucosyl-(1-&gt;2)-beta-D-galactosyl-(1-&gt;3)-N-acetyl-D-galactosamine + GDP + H(+). It functions in the pathway protein modification; protein glycosylation. In terms of biological role, catalyzes the transfer of L-fucose, from a guanosine diphosphate-beta-L-fucose, to the terminal galactose on both O- and N-linked glycans chains of cell surface glycoproteins and glycolipids and the resulting epitope regulates several processes such as cell-cell interaction including host-microbe interaction, cell surface expression and cell proliferation. Preferentially fucosylates gangliosides GA1 and GM1 in the antrum, cecum and colon and in the female reproductive organs. Fucosylated host glycoproteins or glycolipids mediate interaction with intestinal microbiota influencing its composition. Creates a soluble precursor oligosaccharide FuC-alpha ((1,2)Galbeta-) called the H antigen which is an essential substrate for the final step in the soluble ABO blood group antigen synthesis pathway. The protein is Galactoside alpha-(1,2)-fucosyltransferase 2 of Sus scrofa (Pig).